A 230-amino-acid chain; its full sequence is MSFKREGDDWSQLNVLKKRRVGDLLASYIPEDEALMLRDGRFACAICPHRPVLDTLAMLTAHRAGKKHLSSLQLFYGKKQPGKERKQNPKHQNELRREETKAEAPLLTQTRLITQSALHRAPHYNSCCRRKYRPEAPGPSVSLSPMPPSEVKLQSGKISREPEPAAGPQAEESATVSAPAPMSPTRRRALDHYLTLRSSGWIPDGRGRWVKDENVEFDSDEEEPPDLPLD.

Residue Ser-2 is modified to Phosphoserine. A Bipartite nuclear localization signal motif is present at residues 4 to 20 (KREGDDWSQLNVLKKRR). Residues 42–74 (FACAICPHRPVLDTLAMLTAHRAGKKHLSSLQL) form a Matrin-type zinc finger. Lys-67 is covalently cross-linked (Glycyl lysine isopeptide (Lys-Gly) (interchain with G-Cter in SUMO2)). Disordered stretches follow at residues 76-106 (YGKK…EAPL), 129-186 (RRKY…SPTR), and 200-230 (GWIP…LPLD). The segment covering 81-102 (PGKERKQNPKHQNELRREETKA) has biased composition (basic and acidic residues). A Phosphoserine modification is found at Ser-144. The segment covering 164–174 (PAAGPQAEESA) has biased composition (low complexity). Ser-183 is subject to Phosphoserine. The interval 188–230 (RALDHYLTLRSSGWIPDGRGRWVKDENVEFDSDEEEPPDLPLD) is required for interaction with LUC7L2. Residues 205 to 214 (GRGRWVKDEN) are compositionally biased toward basic and acidic residues. The span at 215–230 (VEFDSDEEEPPDLPLD) shows a compositional bias: acidic residues. Ser-219 carries the phosphoserine modification.

In terms of assembly, component of the minor spliceosome, which splices U12-type introns. Within this complex, interacts with RNF113A, as well as with SF3B1/SF3b155, SF3B2/SF3b145, SF3B3/SF3b130 and CDC5L. May interact with LUC7L2 and SNRNP70.

It is found in the nucleus. Its subcellular location is the nucleoplasm. The protein resides in the nucleus speckle. Functionally, as a component of the minor spliceosome, involved in the splicing of U12-type introns in pre-mRNAs. Plays a role in the regulation of primary cilia length and Hedgehog signaling. The sequence is that of Sodium channel modifier 1 (SCNM1) from Homo sapiens (Human).